The primary structure comprises 426 residues: Tyrosine--tRNA ligase (426 aa).

Position 35 (Y35) interacts with L-tyrosine. Positions 40–49 (PTAPSLHIGH) match the 'HIGH' region motif. Residues Y174 and Q178 each coordinate L-tyrosine. Positions 234–238 (KFGKT) match the 'KMSKS' region motif. An ATP-binding site is contributed by K237. Positions 358 to 418 (PRVVDALVAT…WAVIRRGRRA (61 aa)) constitute an S4 RNA-binding domain.

It belongs to the class-I aminoacyl-tRNA synthetase family. TyrS type 1 subfamily. As to quaternary structure, homodimer.

The protein localises to the cytoplasm. The catalysed reaction is tRNA(Tyr) + L-tyrosine + ATP = L-tyrosyl-tRNA(Tyr) + AMP + diphosphate + H(+). In terms of biological role, catalyzes the attachment of tyrosine to tRNA(Tyr) in a two-step reaction: tyrosine is first activated by ATP to form Tyr-AMP and then transferred to the acceptor end of tRNA(Tyr). The protein is Tyrosine--tRNA ligase of Acidothermus cellulolyticus (strain ATCC 43068 / DSM 8971 / 11B).